Here is a 208-residue protein sequence, read N- to C-terminus: ATP-dependent Clp protease proteolytic subunit (208 aa).

The active-site Nucleophile is the serine 107. The active site involves histidine 132.

It belongs to the peptidase S14 family. Fourteen ClpP subunits assemble into 2 heptameric rings which stack back to back to give a disk-like structure with a central cavity, resembling the structure of eukaryotic proteasomes.

The protein resides in the cytoplasm. It catalyses the reaction Hydrolysis of proteins to small peptides in the presence of ATP and magnesium. alpha-casein is the usual test substrate. In the absence of ATP, only oligopeptides shorter than five residues are hydrolyzed (such as succinyl-Leu-Tyr-|-NHMec, and Leu-Tyr-Leu-|-Tyr-Trp, in which cleavage of the -Tyr-|-Leu- and -Tyr-|-Trp bonds also occurs).. In terms of biological role, cleaves peptides in various proteins in a process that requires ATP hydrolysis. Has a chymotrypsin-like activity. Plays a major role in the degradation of misfolded proteins. The protein is ATP-dependent Clp protease proteolytic subunit of Methylorubrum extorquens (strain CM4 / NCIMB 13688) (Methylobacterium extorquens).